A 180-amino-acid chain; its full sequence is Large ribosomal subunit protein uL6 (180 aa).

It belongs to the universal ribosomal protein uL6 family. In terms of assembly, part of the 50S ribosomal subunit.

Functionally, this protein binds to the 23S rRNA, and is important in its secondary structure. It is located near the subunit interface in the base of the L7/L12 stalk, and near the tRNA binding site of the peptidyltransferase center. This is Large ribosomal subunit protein uL6 from Picrophilus torridus (strain ATCC 700027 / DSM 9790 / JCM 10055 / NBRC 100828 / KAW 2/3).